Reading from the N-terminus, the 913-residue chain is Calcium-activated chloride channel regulator 1 (913 aa).

The signal sequence occupies residues 1-21 (MGSFKSSVFILVLHLLEGALS). Positions 46 to 199 (DETLIQQIKD…DIAGKNVVNH (154 aa)) are metalloprotease domain. A Zn(2+)-binding site is contributed by histidine 156. Glutamate 157 is an active-site residue. Zn(2+)-binding residues include histidine 160 and asparagine 167. In terms of domain architecture, VWFA spans 306 to 475 (IVCLVLDKSG…NGLIDAFGAL (170 aa)). Residues asparagine 503, asparagine 514, asparagine 770, asparagine 804, asparagine 810, asparagine 836, and asparagine 885 are each glycosylated (N-linked (GlcNAc...) asparagine).

Belongs to the CLCR family. Glycosylated. Post-translationally, the translation product is autoproteolytically cleaved by the metalloprotease domain in the endoplasmic reticulum into a N-terminal and a C-terminal products that remain physically associated with each other. The cleavage is necessary for calcium-activated chloride channel (CaCC) activation activity. Expressed in mucin-producing cells in the respiratory and intestinal tracts, cutaneous sweat glands, and renal mucous glands (at protein level). Strong overexpression in the airways of horses with recurrent airway obstruction (at protein level).

Its subcellular location is the secreted. It is found in the extracellular space. Its function is as follows. May be involved in mediating calcium-activated chloride conductance. May play critical roles in goblet cell metaplasia, mucus hypersecretion, cystic fibrosis and AHR. May be involved in the regulation of mucus production and/or secretion by goblet cells. Involved in the regulation of tissue inflammation in the innate immune response. May play a role as a tumor suppressor. Induces MUC5AC. This is Calcium-activated chloride channel regulator 1 (CLCA1) from Equus caballus (Horse).